We begin with the raw amino-acid sequence, 41 residues long: uncharacterized protein (41 aa).

The interval 1–41 (MGKKHRNRITGQKKNNHIPEKDIIAAEEAHGKEYSAAKRKP) is disordered. Residues 17–41 (HIPEKDIIAAEEAHGKEYSAAKRKP) are compositionally biased toward basic and acidic residues.

This is an uncharacterized protein from Bacillus subtilis (strain 168).